Consider the following 466-residue polypeptide: ATP synthase subunit beta (466 aa).

ATP is bound at residue 156-163 (GGAGVGKT).

It belongs to the ATPase alpha/beta chains family. As to quaternary structure, F-type ATPases have 2 components, CF(1) - the catalytic core - and CF(0) - the membrane proton channel. CF(1) has five subunits: alpha(3), beta(3), gamma(1), delta(1), epsilon(1). CF(0) has three main subunits: a(1), b(2) and c(9-12). The alpha and beta chains form an alternating ring which encloses part of the gamma chain. CF(1) is attached to CF(0) by a central stalk formed by the gamma and epsilon chains, while a peripheral stalk is formed by the delta and b chains.

It localises to the cell membrane. The enzyme catalyses ATP + H2O + 4 H(+)(in) = ADP + phosphate + 5 H(+)(out). In terms of biological role, produces ATP from ADP in the presence of a proton gradient across the membrane. The catalytic sites are hosted primarily by the beta subunits. In Polynucleobacter asymbioticus (strain DSM 18221 / CIP 109841 / QLW-P1DMWA-1) (Polynucleobacter necessarius subsp. asymbioticus), this protein is ATP synthase subunit beta.